The following is a 342-amino-acid chain: Oxygen-dependent coproporphyrinogen-III oxidase (342 aa).

Ser-98 provides a ligand contact to substrate. A divalent metal cation is bound by residues His-102 and His-112. Catalysis depends on His-112, which acts as the Proton donor. Substrate is bound at residue 114 to 116 (NYR). Residues His-146 and His-176 each contribute to the a divalent metal cation site. The interval 266–301 (YVEFNLVWDRGTIFGLQTNGRTESILMSLPPLARWE) is important for dimerization.

This sequence belongs to the aerobic coproporphyrinogen-III oxidase family. In terms of assembly, homodimer. A divalent metal cation serves as cofactor.

Its subcellular location is the cytoplasm. The catalysed reaction is coproporphyrinogen III + O2 + 2 H(+) = protoporphyrinogen IX + 2 CO2 + 2 H2O. Its pathway is porphyrin-containing compound metabolism; protoporphyrin-IX biosynthesis; protoporphyrinogen-IX from coproporphyrinogen-III (O2 route): step 1/1. Functionally, involved in the heme and chlorophyll biosynthesis. Catalyzes the aerobic oxidative decarboxylation of propionate groups of rings A and B of coproporphyrinogen-III to yield the vinyl groups in protoporphyrinogen-IX. The protein is Oxygen-dependent coproporphyrinogen-III oxidase of Prochlorococcus marinus (strain MIT 9301).